The chain runs to 774 residues: E3 ubiquitin-protein ligase RFWD3 (774 aa).

Phosphoserine; by ATM and ATR is present on residues S46 and S63. 3 disordered regions span residues 95–116 (NPRT…PASS), 139–225 (PSSS…AEYG), and 257–280 (GGKT…ASMD). Residues 106–116 (SDGNHTIPASS) show a composition bias toward polar residues. Positions 150 to 162 (RTRRRVSASRRAR) are enriched in basic residues. Low complexity predominate over residues 211–221 (SSSSDSDSDSS). An RING-type; degenerate zinc finger spans residues 287–331 (CTICLEQWTNAGDHRLSALRCGHLFGYRCISTWLKGQVRKCPQCN). A coiled-coil region spans residues 361–413 (SLLKEQMLRKQAELESAQCRLQLQVLTDKCTRLQRRVQDLQKLTSHQSQNLQQ). WD repeat units follow at residues 495–537 (MHGK…QTYN), 539–577 (GRPV…SHVQ), and 583–628 (KARC…SHWP).

As to quaternary structure, interacts with MDM2 and p53/TP53. Binds to the RPA complex via direct interaction with RPA2. Interacts with RAD51. In terms of processing, phosphorylated at Ser-46 and Ser-63 upon DNA damage by ATM or ATR. ATM phosphorylation occurs at early times upon DNA damage, while ATR is the major kinase at later times. Phosphorylation by ATM and ATR is required to stabilize p53/TP53. Part of the phosphorylation depends upon RPA2 presence.

The protein resides in the nucleus. The protein localises to the PML body. It is found in the cytoplasm. The catalysed reaction is S-ubiquitinyl-[E2 ubiquitin-conjugating enzyme]-L-cysteine + [acceptor protein]-L-lysine = [E2 ubiquitin-conjugating enzyme]-L-cysteine + N(6)-ubiquitinyl-[acceptor protein]-L-lysine.. It participates in protein modification; protein ubiquitination. In terms of biological role, E3 ubiquitin-protein ligase required for the repair of DNA interstrand cross-links (ICL) in response to DNA damage. Plays a key role in RPA-mediated DNA damage signaling and repair. Acts by mediating ubiquitination of the RPA complex (RPA1, RPA2 and RPA3 subunits) and RAD51 at stalled replication forks, leading to remove them from DNA damage sites and promote homologous recombination. Also mediates the ubiquitination of p53/TP53 in the late response to DNA damage, and acts as a positive regulator of p53/TP53 stability, thereby regulating the G1/S DNA damage checkpoint. May act by catalyzing the formation of short polyubiquitin chains on p53/TP53 that are not targeted to the proteasome. In response to ionizing radiation, interacts with MDM2 and enhances p53/TP53 ubiquitination, possibly by restricting MDM2 from extending polyubiquitin chains on ubiquitinated p53/TP53. Required to translesion DNA synthesis across DNA-protein cross-link adducts by catalyzing ubiquitination of proteins on single-stranded DNA (ssDNA). This chain is E3 ubiquitin-protein ligase RFWD3, found in Homo sapiens (Human).